The sequence spans 118 residues: UPF0342 protein LCK_01004 (118 aa).

The protein belongs to the UPF0342 family.

The chain is UPF0342 protein LCK_01004 from Leuconostoc citreum (strain KM20).